The sequence spans 182 residues: Mesencephalic astrocyte-derived neurotrophic factor (182 aa).

The first 24 residues, 1–24, serve as a signal peptide directing secretion; the sequence is MRRMWATQGLAVALALSVLPGSRA. 4 disulfides stabilise this stretch: C30–C117, C33–C106, C64–C75, and C151–C154. Y76 is modified (phosphotyrosine). Positions 96–158 are interacts with ERN1, EIF2AK3 and ATF6; the sequence is LAHHIPVEKI…ETCKGCAEKS (63 aa). The tract at residues 129–172 is interacts with HSPA5; that stretch reads TVDLKKLRVKELKKILDDWGETCKGCAEKSDYIRKINELMPKYA.

Belongs to the ARMET family. In terms of assembly, interacts directly (via SAP domain) with HSPA5/BiP; the interaction inhibits ATP binding to HSPA5/BiP and subsequent nucleotide exchange. Component of a complex containing at least CRELD2, MANF, MATN3 and PDIA4. Interacts (via C-terminus) with ERN1 (via luminal domain); the interaction is decreased in the presence of increasing concentrations of Ca(2+). May contain sialic acid residues.

It is found in the secreted. Its subcellular location is the endoplasmic reticulum lumen. The protein resides in the sarcoplasmic reticulum lumen. Its function is as follows. Selectively promotes the survival of dopaminergic neurons of the ventral mid-brain. Modulates GABAergic transmission to the dopaminergic neurons of the substantia nigra. Enhances spontaneous, as well as evoked, GABAergic inhibitory postsynaptic currents in dopaminergic neurons. Inhibits cell proliferation and endoplasmic reticulum (ER) stress-induced cell death. Retained in the ER/sarcoplasmic reticulum (SR) through association with the endoplasmic reticulum chaperone protein HSPA5 under normal conditions. Stabilizes HSPA5/BiP in its substrate-bound ADP state, which facilitates HSPA5/BiP incorporation into chaperone-client complexes during endoplasmic reticulum stress, its interaction with HSPA5/BiP inhibits ATP binding to HSPA5/BiP and subsequent nucleotide exchange. As a result acts as a repressor of the unfolded protein response (UPR) pathway. Up-regulated and secreted by the ER/SR in response to ER stress and hypoxia. Following secretion by the ER/SR, directly binds to 3-O-sulfogalactosylceramide, a lipid sulfatide in the outer cell membrane of target cells. Sulfatide binding promotes its cellular uptake by endocytosis, and is required for its role in alleviating ER stress and cell toxicity under hypoxic and ER stress conditions. Essential for embryonic lung development. Required for the correct postnatal temporal and structural development of splenic white pulp. Required for the repair-associated myeloid response in skeletal muscle, acts as a regulator of phenotypic transition towards prorepair macrophages in response to muscle injury and as a result limits excessive proinflammatory signaling. Represses RELA expression and therefore NF-kB signaling in the myocardium, as a result limits macrophage infiltration of injured tissue and M1 macrophage differentiation in response to myocardial injury. Required for endochondral ossification in long bones and the skull during postnatal development. This is Mesencephalic astrocyte-derived neurotrophic factor from Homo sapiens (Human).